Consider the following 190-residue polypeptide: Small ribosomal subunit protein eS7A (190 aa).

N-acetylserine is present on Ser-2. Residues Lys-83, Lys-84, and Lys-124 each participate in a glycyl lysine isopeptide (Lys-Gly) (interchain with G-Cter in ubiquitin) cross-link.

It belongs to the eukaryotic ribosomal protein eS7 family. Component of the small ribosomal subunit (SSU). Mature yeast ribosomes consist of a small (40S) and a large (60S) subunit. The 40S small subunit contains 1 molecule of ribosomal RNA (18S rRNA) and 33 different proteins (encoded by 57 genes). The large 60S subunit contains 3 rRNA molecules (25S, 5.8S and 5S rRNA) and 46 different proteins (encoded by 81 genes). Interacts with snoRNA U3. uS11 interacts with MPP10. Component of the ribosomal small subunit (SSU) processome composed of at least 40 protein subunits and snoRNA U3. In terms of processing, N-terminally acetylated by acetyltransferase NatA. Post-translationally, ubiquitinated at Lys-83 and Lys-84 in response to stalled ribosomes, leading to activation of the No-Go Decay (NGD) pathway: first monoubiquitinated by MOT2/NOT4, followed by formation by HEL2 of 'Lys-63'-linked polyubiquitin chains on monoubiquitin.

Its subcellular location is the cytoplasm. It localises to the nucleus. It is found in the nucleolus. In terms of biological role, component of the ribosome, a large ribonucleoprotein complex responsible for the synthesis of proteins in the cell. The small ribosomal subunit (SSU) binds messenger RNAs (mRNAs) and translates the encoded message by selecting cognate aminoacyl-transfer RNA (tRNA) molecules. The large subunit (LSU) contains the ribosomal catalytic site termed the peptidyl transferase center (PTC), which catalyzes the formation of peptide bonds, thereby polymerizing the amino acids delivered by tRNAs into a polypeptide chain. The nascent polypeptides leave the ribosome through a tunnel in the LSU and interact with protein factors that function in enzymatic processing, targeting, and the membrane insertion of nascent chains at the exit of the ribosomal tunnel. eS7 is involved in nucleolar processing of pre-18S ribosomal RNA and ribosome assembly. The protein is Small ribosomal subunit protein eS7A of Saccharomyces cerevisiae (strain ATCC 204508 / S288c) (Baker's yeast).